Reading from the N-terminus, the 1193-residue chain is Probable DNA-directed RNA polymerase II subunit RPB2 homolog (1193 aa).

Residue Asp-808 participates in Mg(2+) binding. Positions 1137, 1140, 1155, and 1158 each coordinate Zn(2+). The C4-type zinc finger occupies 1137–1158 (CVPCKSYFKVVKTQNGFFCSGC).

This sequence belongs to the RNA polymerase beta chain family.

The enzyme catalyses RNA(n) + a ribonucleoside 5'-triphosphate = RNA(n+1) + diphosphate. Its function is as follows. Component of the DNA-dependent RNA polymerase that catalyzes the transcription of DNA into RNA using the four ribonucleoside triphosphates as substrates. Second largest component of RNA polymerase II which synthesizes mRNA precursors and many functional non-coding RNAs. Proposed to contribute to the polymerase catalytic activity and forms the polymerase active center together with the largest subunit. In Invertebrate iridescent virus 6 (IIV-6), this protein is Probable DNA-directed RNA polymerase II subunit RPB2 homolog.